We begin with the raw amino-acid sequence, 131 residues long: Small ribosomal subunit protein uS8 (131 aa).

The protein belongs to the universal ribosomal protein uS8 family. In terms of assembly, part of the 30S ribosomal subunit. Contacts proteins S5 and S12.

Functionally, one of the primary rRNA binding proteins, it binds directly to 16S rRNA central domain where it helps coordinate assembly of the platform of the 30S subunit. The chain is Small ribosomal subunit protein uS8 from Chlorobium chlorochromatii (strain CaD3).